An 84-amino-acid polypeptide reads, in one-letter code: Magnetosome protein MamG (84 aa).

Topologically, residues 1–3 (MIK) are cytoplasmic. Residues 4 to 24 (GIAGVGGTALGVGGGVAAPPV) form a helical membrane-spanning segment. At 25–40 (SAAAVGSTLLAGKGVC) the chain is on the lumenal side. Positions 41-48 (LGLGLGLG) are LG repeat. A helical transmembrane segment spans residues 41 to 61 (LGLGLGLGAWGPVLLGVAGLA). The Cytoplasmic segment spans residues 62–84 (CAASLCDYLKNRKAQAEASAEPA).

This sequence belongs to the magnetosome MamG (TC 9.B.95) protein family.

It localises to the magnetosome membrane. Plays a role in regulating magnetite crystal size. This chain is Magnetosome protein MamG, found in Magnetospirillum gryphiswaldense (strain DSM 6361 / JCM 21280 / NBRC 15271 / MSR-1).